The following is a 536-amino-acid chain: Phosphoenolpyruvate carboxykinase (ATP) (536 aa).

The substrate site is built by Arg61, Tyr195, and Lys201. ATP is bound by residues Lys201, His220, and 236–244; that span reads GLSGTGKTT. Mn(2+) contacts are provided by Lys201 and His220. Asp257 contacts Mn(2+). ATP is bound by residues Glu285, Arg322, and Thr447. Arg322 is a binding site for substrate.

The protein belongs to the phosphoenolpyruvate carboxykinase (ATP) family. Requires Mn(2+) as cofactor.

Its subcellular location is the cytoplasm. The catalysed reaction is oxaloacetate + ATP = phosphoenolpyruvate + ADP + CO2. Its pathway is carbohydrate biosynthesis; gluconeogenesis. In terms of biological role, involved in the gluconeogenesis. Catalyzes the conversion of oxaloacetate (OAA) to phosphoenolpyruvate (PEP) through direct phosphoryl transfer between the nucleoside triphosphate and OAA. This chain is Phosphoenolpyruvate carboxykinase (ATP), found in Rhizobium etli (strain CIAT 652).